Here is a 177-residue protein sequence, read N- to C-terminus: Centromere protein R (177 aa).

Lysine 8 participates in a covalent cross-link: Glycyl lysine isopeptide (Lys-Gly) (interchain with G-Cter in SUMO2). An LXXLL motif motif is present at residues 9–13 (LDGLL). Residue serine 17 is modified to Phosphoserine. The tract at residues 20–50 (PSKITRKKSVITYSPTTGTCQMSLFASPTSS) is DD1. Lysine 22 participates in a covalent cross-link: Glycyl lysine isopeptide (Lys-Gly) (interchain with G-Cter in SUMO2). Serine 28 carries the post-translational modification Phosphoserine. The segment covering 41–50 (MSLFASPTSS) has biased composition (polar residues). Residues 41–81 (MSLFASPTSSEEQKHRNGLSNEKRKKLNHPSLTESKESTTK) form a disordered region. Residues 63–66 (KRKK) carry the Nuclear localization signal motif. Serine 71 carries the phosphoserine modification. A coiled-coil region spans residues 83-113 (NDEFMMLLSKVEKLSEEIMEIMQNLSSIQAL). The short motif at 172-176 (LKAIL) is the LXXIL motif element.

In terms of assembly, homodimer; mediated by the coiled coil domain. Isoform 3, but not other isoforms, interacts with the cytoplasmic tail of integrin ITGB3. The relevance of the interaction with ITGB3 is however uncertain, since isoform 3 is mainly nuclear. Interacts with CCNA2 and MTA1. Interacts with NFKB1 NF-kappa-B subunit. Component of the CENPA-CAD complex, composed of CENPI, CENPK, CENPL, CENPO, CENPP, CENPQ, CENPR and CENPS. The CENPA-CAD complex interacts with the CENPA-NAC complex, at least composed of CENPA, CENPC, CENPH, CENPM, CENPN, CENPT and CENPU. Interacts with TASOR. In terms of tissue distribution, widely expressed. Expressed in spleen, thymus, prostate, ovary, small intestine and white blood cells. Highly expressed in testis and colon. Isoform 4 is expressed in platelets, lymphocytes and granulocytes.

The protein localises to the nucleus. It is found in the chromosome. The protein resides in the centromere. It localises to the kinetochore. Its subcellular location is the cytoplasm. Its function is as follows. Transcription coregulator that can have both coactivator and corepressor functions. Isoform 1, but not other isoforms, is involved in the coactivation of nuclear receptors for retinoid X (RXRs) and thyroid hormone (TRs) in a ligand-dependent fashion. In contrast, it does not coactivate nuclear receptors for retinoic acid, vitamin D, progesterone receptor, nor glucocorticoid. Acts as a coactivator for estrogen receptor alpha. Acts as a transcriptional corepressor via its interaction with the NFKB1 NF-kappa-B subunit, possibly by interfering with the transactivation domain of NFKB1. Induces apoptosis in breast cancer cells, but not in other cancer cells, via a caspase-2 mediated pathway that involves mitochondrial membrane permeabilization but does not require other caspases. May also act as an inhibitor of cyclin A-associated kinase. Also acts a component of the CENPA-CAD (nucleosome distal) complex, a complex recruited to centromeres which is involved in assembly of kinetochore proteins, mitotic progression and chromosome segregation. May be involved in incorporation of newly synthesized CENPA into centromeres via its interaction with the CENPA-NAC complex. In Homo sapiens (Human), this protein is Centromere protein R (ITGB3BP).